The following is a 634-amino-acid chain: DNA-directed RNA polymerase subunit gamma (634 aa).

Positions 74, 76, 89, and 92 each coordinate Zn(2+). Mg(2+) contacts are provided by Asp-471, Asp-473, and Asp-475.

The protein belongs to the RNA polymerase beta' chain family. RpoC1 subfamily. In cyanobacteria the RNAP catalytic core is composed of 2 alpha, 1 beta, 1 beta', 1 gamma and 1 omega subunit. When a sigma factor is associated with the core the holoenzyme is formed, which can initiate transcription. Mg(2+) is required as a cofactor. The cofactor is Zn(2+).

It catalyses the reaction RNA(n) + a ribonucleoside 5'-triphosphate = RNA(n+1) + diphosphate. Its function is as follows. DNA-dependent RNA polymerase catalyzes the transcription of DNA into RNA using the four ribonucleoside triphosphates as substrates. This chain is DNA-directed RNA polymerase subunit gamma, found in Prochlorococcus marinus (strain MIT 9312).